We begin with the raw amino-acid sequence, 269 residues long: tRNA pseudouridine synthase A (269 aa).

Asp-51 functions as the Nucleophile in the catalytic mechanism. Tyr-109 contacts substrate.

This sequence belongs to the tRNA pseudouridine synthase TruA family. In terms of assembly, homodimer.

The enzyme catalyses uridine(38/39/40) in tRNA = pseudouridine(38/39/40) in tRNA. Its function is as follows. Formation of pseudouridine at positions 38, 39 and 40 in the anticodon stem and loop of transfer RNAs. This Haemophilus influenzae (strain ATCC 51907 / DSM 11121 / KW20 / Rd) protein is tRNA pseudouridine synthase A.